The sequence spans 366 residues: NADH-quinone oxidoreductase subunit D (366 aa).

It belongs to the complex I 49 kDa subunit family. In terms of assembly, NDH-1 is composed of 14 different subunits. Subunits NuoB, C, D, E, F, and G constitute the peripheral sector of the complex.

It localises to the cell membrane. It catalyses the reaction a quinone + NADH + 5 H(+)(in) = a quinol + NAD(+) + 4 H(+)(out). Functionally, NDH-1 shuttles electrons from NADH, via FMN and iron-sulfur (Fe-S) centers, to quinones in the respiratory chain. The immediate electron acceptor for the enzyme in this species is believed to be a menaquinone. Couples the redox reaction to proton translocation (for every two electrons transferred, four hydrogen ions are translocated across the cytoplasmic membrane), and thus conserves the redox energy in a proton gradient. The polypeptide is NADH-quinone oxidoreductase subunit D (Bacillus cytotoxicus (strain DSM 22905 / CIP 110041 / 391-98 / NVH 391-98)).